The sequence spans 604 residues: MATLGAWDYTILAVVLIISVAIGIYYRFVGGKQSTTTEYLLADRSMNVAPVAFSLMASFMSAVTILGVSMENYQYGTMFVVINLSYVLSTPVAAYLIIPVFYRLKTASVYEYLELRFGYATRLAASLSFSLQMVLYMGIVVYAPALALEAVTGLSQVFSIVIVGVVCTFYATLGGMKAVLITDIYQSLLMFAAVFSVIICAWVKAGSLEVIWRVAQENGRINLTNFSVDPTERHTWFTQILGGCATYLAIYGVNQTQVQRLMAVKSLSAARAALWWCLPILCLLSLSTCFSGLCIYWYYRDCDPLLEGRVNSRDQVMPLFVVDTMGEYTGLAGLFVSGIFCASLSTISSIISSLAAVTLEDYLKPLVSCCAKRTLTDRQTLWYSKLLSLFFGALCIGMAFMAGSIGGLLQAALSIFGIIGGPLLGLFTLGMYVTKANEKGAIGGLLISLAFCFWIGFGQPKPPLVSLDMSTAGCPVDRSFARDIFLKTVIAVAEEEHYFYLYRISYMWYAALGFLITFFGGWLLSWLFALLKWDNNRRIYQDADCTLIKHDLFVPPIAKRLQRRQMPLLVVTGTSSEIGGITTESATAPPRLDEIEWEKHKAVA.

The next 6 helical transmembrane spans lie at 4-24, 48-68, 78-98, 134-154, 160-180, and 188-208; these read LGAWDYTILAVVLIISVAIGI, VAPVAFSLMASFMSAVTILGV, MFVVINLSYVLSTPVAAYLII, VLYMGIVVYAPALALEAVTGL, IVIVGVVCTFYATLGGMKAVL, and LLMFAAVFSVIICAWVKAGSL. Asn222 and Asn225 each carry an N-linked (GlcNAc...) asparagine glycan. Helical transmembrane passes span 234–254, 273–293, 331–351, 389–409, 413–433, 440–460, and 511–531; these read HTWFTQILGGCATYLAIYGVN, ALWWCLPILCLLSLSTCFSGL, LAGLFVSGIFCASLSTISSII, LFFGALCIGMAFMAGSIGGLL, LSIFGIIGGPLLGLFTLGMYV, GAIGGLLISLAFCFWIGFGQP, and ALGFLITFFGGWLLSWLFALL.

This sequence belongs to the sodium:solute symporter (SSF) (TC 2.A.21) family.

It localises to the cell membrane. The sequence is that of Putative sodium-dependent multivitamin transporter from Drosophila melanogaster (Fruit fly).